We begin with the raw amino-acid sequence, 369 residues long: Type 2 DNA topoisomerase 6 subunit A (369 aa).

One can recognise a Topo IIA-type catalytic domain in the interval 11 to 149 (KGDALAREKL…FHMRPEEDGA (139 aa)). Residue Tyr-106 is the O-(5'-phospho-DNA)-tyrosine intermediate of the active site. The Mg(2+) site is built by Glu-202 and Asp-254.

This sequence belongs to the TOP6A family. As to quaternary structure, homodimer. Heterotetramer of two Top6A and two Top6B chains. The cofactor is Mg(2+).

It carries out the reaction ATP-dependent breakage, passage and rejoining of double-stranded DNA.. Relaxes both positive and negative superturns and exhibits a strong decatenase activity. This is Type 2 DNA topoisomerase 6 subunit A from Methanosarcina mazei (strain ATCC BAA-159 / DSM 3647 / Goe1 / Go1 / JCM 11833 / OCM 88) (Methanosarcina frisia).